A 234-amino-acid chain; its full sequence is MRAPLCLLLLVAHAVDMLALNRRKKQVGTGLGGNCTGCIICSEENGCSTCQQRLFLFIRREGIRQYGKCLHDCPPGYFGIRGQEVNRCKKCGATCESCFSQDFCIRCKRQFYLYKGKCLPTCPPGTLAHQNTRECQGECELGPWGGWSPCTHNGKTCGSAWGLESRVREAGRAGHEEAATCQVLSESRKCPIQRPCPGERSPGQKKGRKDRRPRKDRKLDRRLDVRPRQPGLQP.

Residues 1 to 19 (MRAPLCLLLLVAHAVDMLA) form the signal peptide. N-linked (GlcNAc...) asparagine glycosylation is present at Asn34. 11 disulfides stabilise this stretch: Cys35–Cys41, Cys38–Cys47, Cys50–Cys69, Cys73–Cys88, Cys91–Cys98, Cys95–Cys104, Cys107–Cys118, Cys122–Cys135, Cys139–Cys181, Cys150–Cys157, and Cys190–Cys196. The FU repeat unit spans residues 85–128 (VNRCKKCGATCESCFSQDFCIRCKRQFYLYKGKCLPTCPPGTLA). The TSP type-1 domain maps to 138-197 (ECELGPWGGWSPCTHNGKTCGSAWGLESRVREAGRAGHEEAATCQVLSESRKCPIQRPCP). The disordered stretch occupies residues 190-234 (CPIQRPCPGERSPGQKKGRKDRRPRKDRKLDRRLDVRPRQPGLQP). Residues 203–216 (GQKKGRKDRRPRKD) are compositionally biased toward basic residues. The segment covering 217 to 227 (RKLDRRLDVRP) has biased composition (basic and acidic residues).

It belongs to the R-spondin family. Binds heparin. Interacts with LGR4, LGR5 and LGR6. Post-translationally, tyr-112 may be phosphorylated; however as this position is probably extracellular, the vivo relevance is not proven.

It localises to the secreted. Its function is as follows. Activator of the canonical Wnt signaling pathway by acting as a ligand for LGR4-6 receptors. Upon binding to LGR4-6 (LGR4, LGR5 or LGR6), LGR4-6 associate with phosphorylated LRP6 and frizzled receptors that are activated by extracellular Wnt receptors, triggering the canonical Wnt signaling pathway to increase expression of target genes. Also regulates the canonical Wnt/beta-catenin-dependent pathway and non-canonical Wnt signaling by acting as an inhibitor of ZNRF3, an important regulator of the Wnt signaling pathway. In Homo sapiens (Human), this protein is R-spondin-4 (RSPO4).